Reading from the N-terminus, the 176-residue chain is Ferritin heavy polypeptide-like 17E (176 aa).

The region spanning 10–159 (QNYDWQCEDA…GYLTNLRQMG (150 aa)) is the Ferritin-like diiron domain. Fe cation contacts are provided by Cys27, Glu107, and Gln141.

Belongs to the ferritin family. In terms of tissue distribution, expressed in the testes and spermatogonia.

This chain is Ferritin heavy polypeptide-like 17E, found in Mus musculus (Mouse).